Consider the following 318-residue polypeptide: NADH-ubiquinone oxidoreductase chain 1 (318 aa).

Transmembrane regions (helical) follow at residues 2–22 (FMINLLLMIVPILLAVAFLTL), 68–88 (ISMFIIAPILALALALTMWTP), 100–120 (LGVLFMLAMSSLAVYSILWSG), 146–166 (LAIILLSVLLLNGSFTLPTLI), 171–191 (HMWLIIPSWPLAMMWFISTLA), 222–242 (LFFLAEYANIIMMNIFTTILF), 253–273 (ELYTINFVTKSMLLTISFLWV), and 293–313 (FLPLTLALCMWHVTMPIITAG).

Belongs to the complex I subunit 1 family. As to quaternary structure, core subunit of respiratory chain NADH dehydrogenase (Complex I) which is composed of 45 different subunits.

It is found in the mitochondrion inner membrane. It carries out the reaction a ubiquinone + NADH + 5 H(+)(in) = a ubiquinol + NAD(+) + 4 H(+)(out). Its function is as follows. Core subunit of the mitochondrial membrane respiratory chain NADH dehydrogenase (Complex I) which catalyzes electron transfer from NADH through the respiratory chain, using ubiquinone as an electron acceptor. Essential for the catalytic activity and assembly of complex I. In Hipposideros diadema (Diadem leaf-nosed bat), this protein is NADH-ubiquinone oxidoreductase chain 1 (MT-ND1).